Consider the following 144-residue polypeptide: 3-dehydroquinate dehydratase (144 aa).

Residue Y23 is the Proton acceptor of the active site. Residues N74, H80, and D87 each contribute to the substrate site. The active-site Proton donor is H101. Substrate contacts are provided by residues 102 to 103 (LS) and R112.

This sequence belongs to the type-II 3-dehydroquinase family. Homododecamer.

The catalysed reaction is 3-dehydroquinate = 3-dehydroshikimate + H2O. The protein operates within metabolic intermediate biosynthesis; chorismate biosynthesis; chorismate from D-erythrose 4-phosphate and phosphoenolpyruvate: step 3/7. Its function is as follows. Catalyzes a trans-dehydration via an enolate intermediate. This Mesorhizobium japonicum (strain LMG 29417 / CECT 9101 / MAFF 303099) (Mesorhizobium loti (strain MAFF 303099)) protein is 3-dehydroquinate dehydratase.